The following is a 372-amino-acid chain: MSDINDPNSISLPVGSSCTSRGASTETFTTSRSTTLFSSQQESKDEGNVELRESITLPTINHRVLLSLKESAKVIGTKGSTIQNVREINHVKIGLSEKQLGCSDRVLSCAGRIINVAHSLGQIVSVLKEGSTVSSAEKYAFHFLNPILPPPTRDEFQDLTLDEINKIGTSRLMVTNSQLSSIIGKGGARIKSLKERHRVKIVASRDFLPDSDERILEIQGLPNAITNVLLQISKILLNELDITFASERRYYPHLRSSSPSNAVSLAASTSGVQTGASNYLNNEFKATLKIPESYVGAIAGRRGNRIANLRKFTKTKIIVEKKIDKTVIDVDPDNRTFIILGDHFKNVKLAESMLLKNLDVEIEKRKSRLAKK.

Polar residues predominate over residues 1–23; sequence MSDINDPNSISLPVGSSCTSRGA. The segment at 1–49 is disordered; it reads MSDINDPNSISLPVGSSCTSRGASTETFTTSRSTTLFSSQQESKDEGNV. Residues 24 to 39 show a composition bias toward low complexity; it reads STETFTTSRSTTLFSS. KH domains follow at residues 59-123, 167-232, and 283-354; these read TINH…LGQI, IGTS…LLQI, and EFKA…ESML.

It belongs to the HEK2 family. As to quaternary structure, binds RNA.

The protein resides in the cytoplasm. Its subcellular location is the P-body. It localises to the nucleus. The protein localises to the chromosome. It is found in the telomere. In terms of biological role, RNA-binding protein involved in the correct localization of transcripts in the cell. RNA localization is a widespread mechanism for achieving localized protein synthesis. Involved in structural and functional organization of telomeric chromatin and regulates silencing at the HMR locus. This Zygosaccharomyces rouxii (strain ATCC 2623 / CBS 732 / NBRC 1130 / NCYC 568 / NRRL Y-229) protein is Heterogeneous nuclear rnp K-like protein 2 (HEK2).